We begin with the raw amino-acid sequence, 167 residues long: SsrA-binding protein (167 aa).

The disordered stretch occupies residues 139-167 (QAHDKRHAEKEREWQRDKQRIMRAHNRNA). The segment covering 144–158 (RHAEKEREWQRDKQR) has biased composition (basic and acidic residues).

It belongs to the SmpB family.

Its subcellular location is the cytoplasm. Its function is as follows. Required for rescue of stalled ribosomes mediated by trans-translation. Binds to transfer-messenger RNA (tmRNA), required for stable association of tmRNA with ribosomes. tmRNA and SmpB together mimic tRNA shape, replacing the anticodon stem-loop with SmpB. tmRNA is encoded by the ssrA gene; the 2 termini fold to resemble tRNA(Ala) and it encodes a 'tag peptide', a short internal open reading frame. During trans-translation Ala-aminoacylated tmRNA acts like a tRNA, entering the A-site of stalled ribosomes, displacing the stalled mRNA. The ribosome then switches to translate the ORF on the tmRNA; the nascent peptide is terminated with the 'tag peptide' encoded by the tmRNA and targeted for degradation. The ribosome is freed to recommence translation, which seems to be the essential function of trans-translation. This chain is SsrA-binding protein, found in Xylella fastidiosa (strain M23).